The chain runs to 257 residues: Diaminopimelate epimerase (257 aa).

Substrate-binding residues include asparagine 6 and asparagine 57. The active-site Proton donor is cysteine 66. Substrate contacts are provided by residues 67-68 (GN), asparagine 170, and 188-189 (ER). The active-site Proton acceptor is the cysteine 198. 199 to 200 (GT) contributes to the substrate binding site.

It belongs to the diaminopimelate epimerase family. Homodimer.

Its subcellular location is the cytoplasm. The enzyme catalyses (2S,6S)-2,6-diaminopimelate = meso-2,6-diaminopimelate. It participates in amino-acid biosynthesis; L-lysine biosynthesis via DAP pathway; DL-2,6-diaminopimelate from LL-2,6-diaminopimelate: step 1/1. Its function is as follows. Catalyzes the stereoinversion of LL-2,6-diaminopimelate (L,L-DAP) to meso-diaminopimelate (meso-DAP), a precursor of L-lysine and an essential component of the bacterial peptidoglycan. This chain is Diaminopimelate epimerase, found in Chlorobaculum tepidum (strain ATCC 49652 / DSM 12025 / NBRC 103806 / TLS) (Chlorobium tepidum).